The following is a 365-amino-acid chain: MGVPRPQPWALGLLLFLLPGSLGAESHLSLLYHLTAVSSPAPGTPAFWVSGWLGPQQYLSYNSLRGEAEPCGAWVWENQVSWYWEKETTDLRIKEKLFLEAFKALGGKGPYTLQGLLGCELGPDNTSVPTAKFALNGEEFMNFDLKQGTWGGDWPEALAISQRWQQQDKAANKELTFLLFSCPHRLREHLERGRGNLEWKEPPSMRLKARPSSPGFSVLTCSAFSFYPPELQLRFLRNGLAAGTGQGDFGPNSDGSFHASSSLTVKSGDEHHYCCIVQHAGLAQPLRVELESPAKSSVLVVGIVIGVLLLTAAAVGGALLWRRMRSGLPAPWISLRGDDTGVLLPTPGEAQDADLKDVNVIPATA.

The signal sequence occupies residues 1–23 (MGVPRPQPWALGLLLFLLPGSLG). Residues 24–110 (AESHLSLLYH…AFKALGGKGP (87 aa)) form an alpha-1 region. Residues 24–297 (AESHLSLLYH…VELESPAKSS (274 aa)) are Extracellular-facing. Residues 111-200 (YTLQGLLGCE…ERGRGNLEWK (90 aa)) form an alpha-2 region. Cystine bridges form between C119–C182 and C221–C275. A glycan (N-linked (GlcNAc...) asparagine) is linked at N125. The alpha-3 stretch occupies residues 201 to 290 (EPPSMRLKAR…GLAQPLRVEL (90 aa)). One can recognise an Ig-like C1-type domain in the interval 202–289 (PPSMRLKARP…AGLAQPLRVE (88 aa)). Residues 291 to 297 (ESPAKSS) are connecting peptide. A helical transmembrane segment spans residues 298–321 (VLVVGIVIGVLLLTAAAVGGALLW). The Cytoplasmic portion of the chain corresponds to 322-365 (RRMRSGLPAPWISLRGDDTGVLLPTPGEAQDADLKDVNVIPATA). Position 334 is a phosphoserine (S334).

The protein belongs to the immunoglobulin superfamily. As to quaternary structure, fcRn complex consists of two subunits: p51, and p14 which is equivalent to beta-2-microglobulin. It forms an MHC class I-like heterodimer. Interacts with albumin/ALB; this interaction regulates ALB homeostasis. (Microbial infection) Interacts with Echovirus 6, Echovirus 11 and Echovirus 30 capsid protein VP1. Expressed in full-term placenta, heart, lung, liver, muscle, kidney, pancreas, and both fetal and adult small intestine.

Its subcellular location is the cell membrane. It is found in the endosome membrane. Cell surface receptor that transfers passive humoral immunity from the mother to the newborn. Binds to the Fc region of monomeric immunoglobulin gamma and mediates its selective uptake from milk. IgG in the milk is bound at the apical surface of the intestinal epithelium. The resultant FcRn-IgG complexes are transcytosed across the intestinal epithelium and IgG is released from FcRn into blood or tissue fluids. Throughout life, contributes to effective humoral immunity by recycling IgG and extending its half-life in the circulation. Mechanistically, monomeric IgG binding to FcRn in acidic endosomes of endothelial and hematopoietic cells recycles IgG to the cell surface where it is released into the circulation. In addition of IgG, regulates homeostasis of the other most abundant circulating protein albumin/ALB. In terms of biological role, (Microbial infection) Acts as an uncoating receptor for a panel of echoviruses including Echovirus 5, 6, 7, 9, 11, 13, 25 and 29. This is IgG receptor FcRn large subunit p51 (FCGRT) from Homo sapiens (Human).